We begin with the raw amino-acid sequence, 697 residues long: uncharacterized protein (697 aa).

14 helical membrane passes run 65-85 (PVRNFIEEGCDGVTDLYVGIY), 106-126 (CTFRTNNVKLGYLIVDELHNF), 131-151 (YRQSQFGGITNLDFDAFEKAI), 163-183 (DAALQRIGLTGLAKKSMDINE), 194-214 (LSSYPTRMFNLIKEKSKVPLG), 227-247 (TSATTTASINVRTSATTTASI), 286-306 (STNATTTESTNASAKEDANKD), 316-336 (PVTDINKEPYKRKGSQMVLLE), 361-381 (SDEIKHLFLYGIDIYFCPEGV), 394-414 (MFELCVCWAGQKVSYRRMAWE), 419-439 (ERMLRNDEEYKEYLEDIEPYH), 450-470 (SVKRREIYSQIQRNYAWYLAI), 487-507 (QGSQVFRMSGRQIKELYYKVW), and 558-578 (TSAGLQGPQYVKLQFSRHHRQ). Positions 246-321 (SINVRTSATT…NRFHPVTDIN (76 aa)) are disordered. Positions 251–298 (TSATTTESTNSNTNATTTESTNSSTNATTTASTNSSTNATTTESTNAS) are enriched in low complexity. Basic and acidic residues predominate over residues 299–321 (AKEDANKDGNAEDNRFHPVTDIN).

The protein resides in the membrane. This is an uncharacterized protein from Saccharomyces cerevisiae (strain ATCC 204508 / S288c) (Baker's yeast).